Reading from the N-terminus, the 233-residue chain is Probable cyclic nucleotide phosphodiesterase COSY_0614 (233 aa).

Fe cation-binding residues include aspartate 10, histidine 12, aspartate 48, asparagine 78, histidine 144, histidine 183, and histidine 185. AMP-binding positions include histidine 12, aspartate 48, and asparagine 78–histidine 79. An AMP-binding site is contributed by histidine 185.

It belongs to the cyclic nucleotide phosphodiesterase class-III family. The cofactor is Fe(2+).

The sequence is that of Probable cyclic nucleotide phosphodiesterase COSY_0614 from Vesicomyosocius okutanii subsp. Calyptogena okutanii (strain HA).